A 310-amino-acid chain; its full sequence is uncharacterized protein (310 aa).

This is an uncharacterized protein from Archaeoglobus fulgidus (strain ATCC 49558 / DSM 4304 / JCM 9628 / NBRC 100126 / VC-16).